The following is a 137-amino-acid chain: Dormancy-associated protein homolog 3 (137 aa).

2 disordered regions span residues Met1–Pro55 and Lys69–Met137. Residues Phe32–Ala43 show a composition bias toward polar residues. The segment covering Pro70–Pro87 has biased composition (low complexity). The residue at position 81 (Ser81) is a Phosphoserine. Residues Pro88–Ser97 show a composition bias toward pro residues. The segment covering Glu104 to Glu118 has biased composition (basic and acidic residues). The segment covering Gly127–Met137 has biased composition (polar residues).

It belongs to the DRM1/ARP family.

The sequence is that of Dormancy-associated protein homolog 3 from Arabidopsis thaliana (Mouse-ear cress).